Here is a 195-residue protein sequence, read N- to C-terminus: MMAIRELKVCLLGDTGVGKSSIVCRFVQDHFDHNISPTIGASFMTKTVPCGNELHKFLIWDTAGQERFHSLAPMYYRGSAAAVIVYDITKQDSFHTLKKWVKELKEHGPENIVMAIAGNKCDLSDIREVPLKDAKEYAESIGAIVVETSAKNAINIEELFQGISRQIPPLGPQENGNSGGIKLGNQSLQASRRCC.

GTP is bound by residues Gly-16, Gly-18, Lys-19, Ser-20, Ser-21, Asp-32, and His-33. Position 20 (Ser-20) interacts with Mg(2+). Short sequence motifs (switch) lie at residues 30–42 (HFDH…IGAS) and 63–79 (AGQE…YRGS). Residue Ser-36 is modified to Phosphoserine. 6 residues coordinate GTP: Thr-38, Gly-64, Asn-119, Asp-122, Ala-150, and Lys-151. Thr-38 is a Mg(2+) binding site. The interval 168–195 (PPLGPQENGNSGGIKLGNQSLQASRRCC) is disordered. Residues 184–195 (GNQSLQASRRCC) show a composition bias toward polar residues. S-geranylgeranyl cysteine attachment occurs at residues Cys-194 and Cys-195.

It belongs to the small GTPase superfamily. Rab family. As to quaternary structure, interacts with OCRL. Interacts (in GDP-bound form) with RIN3 and GAPVD1, which function as guanine exchange factors (GEF). Interacts with EGFR. Interacts with NGFR. Interacts (in GTP-bound form) with EEA1. Interacts (in GTP-bound form) with APPL2; interaction contributes to or enhances recruitment of APPL2 to the phagosomes; interaction enhances Fc-gamma receptor-mediated phagocytosis through PI3K/Akt signaling in macrophages. It depends on Mg(2+) as a cofactor. As to expression, detected in brain astrocytes (at protein level).

The protein resides in the early endosome. Its subcellular location is the golgi apparatus. The protein localises to the trans-Golgi network. It is found in the trans-Golgi network membrane. It localises to the cytoplasmic vesicle. The protein resides in the phagosome. Its subcellular location is the phagosome membrane. The catalysed reaction is GTP + H2O = GDP + phosphate + H(+). With respect to regulation, regulated by guanine nucleotide exchange factors (GEFs) including RIN3 and GAPVD1 which promote the exchange of bound GDP for free GTP. Regulated by GTPase activating proteins (GAPs) which increase the GTP hydrolysis activity. Inhibited by GDP dissociation inhibitors (GDIs) which prevent Rab-GDP dissociation. In terms of biological role, the small GTPases Rab are key regulators of intracellular membrane trafficking, from the formation of transport vesicles to their fusion with membranes. Rabs cycle between an inactive GDP-bound form and an active GTP-bound form that is able to recruit to membranes different set of downstream effectors directly responsible for vesicle formation, movement, tethering and fusion. Required for the integrity and for normal function of the Golgi apparatus and the trans-Golgi network. Plays a role in insulin-stimulated translocation of GLUT4 to the cell membrane. Plays a role in the maturation of phagosomes that engulf pathogens, such as S.aureus and Mycobacterium. Plays a role in M6PR transport from the trans-Golgi network to endosomes. Plays a role in the internalization of EGFR from the cell membrane into endosomes. This chain is Ras-related protein Rab-31, found in Mus musculus (Mouse).